The sequence spans 382 residues: uncharacterized protein (382 aa).

The chain crosses the membrane as a helical span at residues 1–21 (MKIILVVFVLIFVGVIGFNMI).

This sequence belongs to the membrane fusion protein (MFP) (TC 8.A.1) family.

The protein resides in the membrane. This is an uncharacterized protein from Haemophilus influenzae (strain ATCC 51907 / DSM 11121 / KW20 / Rd).